The sequence spans 7192 residues: Nonribosomal peptide synthetase gloA (7192 aa).

The segment covering 1 to 48 (MTPSRSLENGEKQMNWNESPQTASPKNVLRDSNSNGNYVNGHGTNING) has biased composition (polar residues). Positions 1-52 (MTPSRSLENGEKQMNWNESPQTASPKNVLRDSNSNGNYVNGHGTNINGDGSD) are disordered. Positions 105 to 181 (HSTSKFKEEF…GLFATANFRP (77 aa)) constitute a Carrier 1 domain. An O-(pantetheine 4'-phosphoryl)serine modification is found at S142. The interval 239–634 (EDVYPCTPLQ…TYTVQCLCNP (396 aa)) is condensation 1. Residues 675-1047 (QDQVNIQPAK…SLMYLGRCDS (373 aa)) are adenylation 1. One can recognise a Carrier 2 domain in the interval 1190–1266 (APSTDAEKQV…DLAFVIQRRL (77 aa)). S1227 bears the O-(pantetheine 4'-phosphoryl)serine mark. The interval 1316 to 1736 (EDIYPCTPLQ…MSWLSDYDEE (421 aa)) is condensation 2. Residues 1758 to 2154 (QEQTKLRPNA…GRRDTQIKIR (397 aa)) form an adenylation 2 region. The Carrier 3 domain maps to 2288 to 2364 (APSTREECLV…ELAELLAKRS (77 aa)). At S2325 the chain carries O-(pantetheine 4'-phosphoryl)serine. Residues 2407 to 2829 (VEDVYPCTPL…LIAPEDQEQI (423 aa)) are condensation 3. An adenylation 3 region spans residues 2849–3245 (YKQVMARPQA…GRRDDQIKIR (397 aa)). In terms of domain architecture, Carrier 4 spans 3378-3455 (TPSTKMEKVI…DLASVMTEHR (78 aa)). S3415 is subject to O-(pantetheine 4'-phosphoryl)serine. Residues 3502 to 3891 (EDIYPCTALQ…NGVLDQFVYI (390 aa)) are condensation 4. The adenylation 4 stretch occupies residues 3920-4320 (QEQALARPTA…ARRDMQVKIR (401 aa)). Residues 4453–4529 (LPSTQVELQL…ELAVILDGRK (77 aa)) form the Carrier 5 domain. O-(pantetheine 4'-phosphoryl)serine is present on S4490. The tract at residues 4574–4971 (EDIYPCTPLQ…QFEYVVQKFH (398 aa)) is condensation 5. The adenylation 5 stretch occupies residues 5013-5414 (DDHVAARPMA…GRQDLQVKIR (402 aa)). One can recognise a Carrier 6 domain in the interval 5551–5627 (APDTDLGRLI…DLVNTLSNRS (77 aa)). The residue at position 5588 (S5588) is an O-(pantetheine 4'-phosphoryl)serine. The tract at residues 5674–6071 (EDVYPSTPLQ…CVVQRILTQS (398 aa)) is condensation 6. Residues 6111–6507 (QAQVKKSPAA…GRRDLQVKIR (397 aa)) are adenylation 6. One can recognise a Carrier 7 domain in the interval 6645–6721 (NPSTTMERQL…DLAVVLTDRL (77 aa)). An O-(pantetheine 4'-phosphoryl)serine modification is found at S6682. A condensation 7 region spans residues 6795-7178 (NGPCDTRALK…NPLSPVKQVL (384 aa)).

This sequence belongs to the NRP synthetase family.

The protein operates within mycotoxin biosynthesis. Functionally, nonribosomal peptide synthetase; part of the gene cluster that mediates the biosynthesis of pneumocandins, lipohexapeptides of the echinocandin family that prevent fungal cell wall formation by non-competitive inhibition of beta-1,3-glucan synthase. The 10,12-dimethylmyristoyl side chain is synthesized by the reducing polyketide synthase gloL/GLPKS4. The thioesterase gloN/GLHYD exclusively interacts with gloL/GLPKS4 to maintain turnover of the polyketide side chain. The 10R,12S-dimethylmyristic acid is then transferred to the first thiolation domain of the nonribosomal peptide synthetase gloA/GLNRPS4 by the acyl-AMP ligase gloD/GLligase, followed by its acylation to L-ornithine to trigger elongation of the cyclic hexapeptide. L-ornithine, 4R-hydroxyl-L-proline (generated from L-proline by the dioxygenase gloF/GLOXY2), 3S-hydroxyl-L-homotyrosine (generated by gloG/GLHtyB, gloH/GLHtyA, gloI/GLHtyC, gloJ/GLHtyD and hydroxylated at C-3 by the dioxygenase gloM/GLOXY1), 3R-hydroxyl-L-glutamine (generated from L-glutamine probably by the dioxygenase gloE/GLOXY3) and 3S-hydroxyl-L-proline (generated from L-proline by the dioxygenase gloF/GLOXY2 to yield pneumocandin B0), or 3S-hydroxyl-4S-methyl-L-proline (generated from L-leucine by the dioxygenase gloC/GLOXY4 to yield pneumocandin A0) are sequentially added to the growing chain. The last C domain of gloA/GLNRPS4 is proposed to be responsible for cyclization by condensation to form the peptide bond between L-ornithine and 3S-hydroxyl-4S-methyl-L-proline (for pneumocandin A0) or 3S-hydroxyl-L-proline (for pneumocandin B0). Finally, the subsequent C-4 hydroxylation of 3S-hydroxyl-L-homotyrosine and L-ornithine dihydroxylation at C-4 and C-5 are performed by the cytochrome P450 monooxygenases gloP/GLP450-1 and gloO/GLP450-2, respectively. In Glarea lozoyensis (strain ATCC 20868 / MF5171), this protein is Nonribosomal peptide synthetase gloA.